Reading from the N-terminus, the 448-residue chain is Eukaryotic translation initiation factor 3 subunit E (448 aa).

The 170-residue stretch at 254–423 (TDLFFSPAYI…GTVIMNHPPQ (170 aa)) folds into the PCI domain.

This sequence belongs to the eIF-3 subunit E family. In terms of assembly, component of the eukaryotic translation initiation factor 3 (eIF-3) complex.

It is found in the cytoplasm. Its function is as follows. Component of the eukaryotic translation initiation factor 3 (eIF-3) complex, which is involved in protein synthesis of a specialized repertoire of mRNAs and, together with other initiation factors, stimulates binding of mRNA and methionyl-tRNAi to the 40S ribosome. The eIF-3 complex specifically targets and initiates translation of a subset of mRNAs involved in cell proliferation. This is Eukaryotic translation initiation factor 3 subunit E (int6) from Emericella nidulans (strain FGSC A4 / ATCC 38163 / CBS 112.46 / NRRL 194 / M139) (Aspergillus nidulans).